We begin with the raw amino-acid sequence, 342 residues long: Anthranilate phosphoribosyltransferase (342 aa).

Residues G79, 82 to 83 (GD), T87, 89 to 92 (NIST), 107 to 115 (KHCNQRISS), and S119 contribute to the 5-phospho-alpha-D-ribose 1-diphosphate site. G79 is an anthranilate binding site. Mg(2+) is bound at residue S91. N110 provides a ligand contact to anthranilate. An anthranilate-binding site is contributed by R165. D223 and E224 together coordinate Mg(2+).

It belongs to the anthranilate phosphoribosyltransferase family. In terms of assembly, homodimer. Requires Mg(2+) as cofactor.

The enzyme catalyses N-(5-phospho-beta-D-ribosyl)anthranilate + diphosphate = 5-phospho-alpha-D-ribose 1-diphosphate + anthranilate. It functions in the pathway amino-acid biosynthesis; L-tryptophan biosynthesis; L-tryptophan from chorismate: step 2/5. Functionally, catalyzes the transfer of the phosphoribosyl group of 5-phosphorylribose-1-pyrophosphate (PRPP) to anthranilate to yield N-(5'-phosphoribosyl)-anthranilate (PRA). This Buchnera aphidicola subsp. Acyrthosiphon pisum (strain 5A) protein is Anthranilate phosphoribosyltransferase.